Reading from the N-terminus, the 259-residue chain is Uridylate kinase (259 aa).

Residue Lys-21–Gly-24 participates in ATP binding. Residue Gly-63 coordinates UMP. Residues Gly-64 and Arg-68 each coordinate ATP. UMP is bound by residues Asp-83 and Thr-144–Thr-151. Positions 171, 177, and 180 each coordinate ATP.

Belongs to the UMP kinase family. Homohexamer.

It is found in the cytoplasm. It carries out the reaction UMP + ATP = UDP + ADP. The protein operates within pyrimidine metabolism; CTP biosynthesis via de novo pathway; UDP from UMP (UMPK route): step 1/1. With respect to regulation, inhibited by UTP. Functionally, catalyzes the reversible phosphorylation of UMP to UDP. The chain is Uridylate kinase from Salinibacter ruber (strain DSM 13855 / M31).